We begin with the raw amino-acid sequence, 89 residues long: MKKGIHPENYREVLFYDASAQMGWVIRSCVATNKSMMWEDGKEYPFYPLDTSSASHPVYTGKRREANTEGRASKFNERFKGMASLAAKK.

This sequence belongs to the bacterial ribosomal protein bL31 family. Type B subfamily. As to quaternary structure, part of the 50S ribosomal subunit.

The chain is Large ribosomal subunit protein bL31B from Haemophilus ducreyi (strain 35000HP / ATCC 700724).